The following is a 490-amino-acid chain: Aspartyl/glutamyl-tRNA(Asn/Gln) amidotransferase subunit B (490 aa).

Belongs to the GatB/GatE family. GatB subfamily. Heterotrimer of A, B and C subunits.

The catalysed reaction is L-glutamyl-tRNA(Gln) + L-glutamine + ATP + H2O = L-glutaminyl-tRNA(Gln) + L-glutamate + ADP + phosphate + H(+). The enzyme catalyses L-aspartyl-tRNA(Asn) + L-glutamine + ATP + H2O = L-asparaginyl-tRNA(Asn) + L-glutamate + ADP + phosphate + 2 H(+). Its function is as follows. Allows the formation of correctly charged Asn-tRNA(Asn) or Gln-tRNA(Gln) through the transamidation of misacylated Asp-tRNA(Asn) or Glu-tRNA(Gln) in organisms which lack either or both of asparaginyl-tRNA or glutaminyl-tRNA synthetases. The reaction takes place in the presence of glutamine and ATP through an activated phospho-Asp-tRNA(Asn) or phospho-Glu-tRNA(Gln). The polypeptide is Aspartyl/glutamyl-tRNA(Asn/Gln) amidotransferase subunit B (Prochlorococcus marinus (strain MIT 9312)).